A 227-amino-acid chain; its full sequence is MNSIEFPLLNQTTQNSVISTTSNDLSNWSRLSSLWPLLYGTSCCFIEFASLIGSRFDFDRYGLVPRSSPRQADLILTAGTVTMKMAPSLVRLYEQMPEPKYVIAMGACTITGGMFSTDSYSTVRGVDKLIPVDVYLPGCPPKPEAVIDAITKLRKKVSREIYEDRVGSQQETRCFTINHKFRVGRSTHTGNYDQGLLYQSPSISEIPYENETFLKYKIAVSSHKLVN.

[4Fe-4S] cluster contacts are provided by Cys43, Cys44, Cys108, and Cys139.

The protein belongs to the complex I 20 kDa subunit family. As to quaternary structure, NDH is composed of at least 16 different subunits, 5 of which are encoded in the nucleus. Requires [4Fe-4S] cluster as cofactor.

Its subcellular location is the plastid. The protein resides in the chloroplast thylakoid membrane. The enzyme catalyses a plastoquinone + NADH + (n+1) H(+)(in) = a plastoquinol + NAD(+) + n H(+)(out). The catalysed reaction is a plastoquinone + NADPH + (n+1) H(+)(in) = a plastoquinol + NADP(+) + n H(+)(out). In terms of biological role, NDH shuttles electrons from NAD(P)H:plastoquinone, via FMN and iron-sulfur (Fe-S) centers, to quinones in the photosynthetic chain and possibly in a chloroplast respiratory chain. The immediate electron acceptor for the enzyme in this species is believed to be plastoquinone. Couples the redox reaction to proton translocation, and thus conserves the redox energy in a proton gradient. This Ranunculus macranthus (Large buttercup) protein is NAD(P)H-quinone oxidoreductase subunit K, chloroplastic.